We begin with the raw amino-acid sequence, 472 residues long: Membrane-bound acylglycerophosphatidylinositol O-acyltransferase MBOAT7 (472 aa).

Topologically, residues Met1–Glu5 are cytoplasmic. Residues Trp6 to Phe22 form a helical membrane-spanning segment. Residues Lys23–Gly33 are Lumenal-facing. The helical transmembrane segment at Ala34–Ile57 threads the bilayer. The Cytoplasmic segment spans residues Leu58–Ala73. A helical membrane pass occupies residues Leu74–Gly93. Residues Leu94–Arg194 lie on the Lumenal side of the membrane. A helical membrane pass occupies residues Ala195 to Phe212. The Cytoplasmic segment spans residues Pro213–Leu231. A helical transmembrane segment spans residues Phe232 to Phe261. Residues Gly262–Trp426 are Lumenal-facing. Residue Asn321 is glycosylated (N-linked (GlcNAc...) asparagine). The chain crosses the membrane as a helical span at residues Ala427 to Leu447. The Cytoplasmic portion of the chain corresponds to Gly448–Glu472. Positions Ser453 to Glu472 are disordered.

This sequence belongs to the membrane-bound acyltransferase family. As to quaternary structure, interacts with SPTSSA; the interaction facilitates MBOAT7 location to mitochondria-associated membranes (MAMs). Overexpressed in metastatic breast and bladder carcinomas relative to normal breast epithelium and urothelium.

The protein localises to the endoplasmic reticulum membrane. It catalyses the reaction a 1-acyl-sn-glycero-3-phospho-(1D-myo-inositol) + (5Z,8Z,11Z,14Z)-eicosatetraenoyl-CoA = a 1-acyl-2-(5Z,8Z,11Z,14Z-eicosatetraenoyl)-sn-glycero-3-phospho-(1D-myo-inositol) + CoA. It carries out the reaction (5Z,8Z,11Z,14Z)-eicosatetraenoyl-CoA + 1-hexadecanoyl-sn-glycero-3-phosphocholine = 1-hexadecanoyl-2-(5Z,8Z,11Z,14Z-eicosatetraenoyl)-sn-glycero-3-phosphocholine + CoA. The enzyme catalyses a 1-acyl-sn-glycero-3-phospho-(1D-myo-inositol) + an acyl-CoA = a 1,2-diacyl-sn-glycero-3-phospho-(1D-myo-inositol) + CoA. The catalysed reaction is 1-octadecanoyl-sn-glycero-3-phospho-(1D-myo-inositol) + (5Z,8Z,11Z,14Z)-eicosatetraenoyl-CoA = 1-octadecanoyl-2-(5Z,8Z,11Z,14Z-eicosatetraenoyl)-sn-glycero-3-phospho-(1D-myo-inositol) + CoA. It functions in the pathway lipid metabolism; phospholipid metabolism. Activity is inhibited by thimerosal. Its function is as follows. Acyltransferase which catalyzes the transfer of an acyl group from an acyl-CoA to a lysophosphatidylinositol (1-acylglycerophosphatidylinositol or LPI) leading to the production of a phosphatidylinositol (1,2-diacyl-sn-glycero-3-phosphoinositol or PI) and participates in the reacylation step of the phospholipid remodeling pathway also known as the Lands cycle. Prefers arachidonoyl-CoA as the acyl donor, thus contributing to the regulation of free levels arachidonic acid in cell. In liver, participates in the regulation of triglyceride metabolism through the phosphatidylinositol acyl-chain remodeling regulation. The polypeptide is Membrane-bound acylglycerophosphatidylinositol O-acyltransferase MBOAT7 (Homo sapiens (Human)).